We begin with the raw amino-acid sequence, 1018 residues long: Integrator complex subunit 5 (1018 aa).

Positions 1–26 (MSALCDPPGAPGPPGPAPATHGPAPL) are disordered. Residue Ser-2 is modified to N-acetylserine. Over residues 8-17 (PGAPGPPGPA) the composition is skewed to pro residues. At Ser-278 the chain carries Phosphoserine. 3 consecutive transmembrane segments (helical) span residues 533–553 (LATQLYAGLVVSLSGLLPLAF), 855–875 (LLFELLKLVAAAPPALCYCSV), and 929–949 (VFSQLAPFEVRLLLLSVWGFL).

The protein belongs to the Integrator subunit 5 family. Component of the Integrator complex, composed of core subunits INTS1, INTS2, INTS3, INTS4, INTS5, INTS6, INTS7, INTS8, INTS9/RC74, INTS10, INTS11/CPSF3L, INTS12, INTS13, INTS14 and INTS15. The core complex associates with protein phosphatase 2A subunits PPP2CA and PPP2R1A, to form the Integrator-PP2A (INTAC) complex.

The protein resides in the nucleus. The protein localises to the cytoplasm. Its subcellular location is the nucleus membrane. Its function is as follows. Component of the integrator complex, a multiprotein complex that terminates RNA polymerase II (Pol II) transcription in the promoter-proximal region of genes. The integrator complex provides a quality checkpoint during transcription elongation by driving premature transcription termination of transcripts that are unfavorably configured for transcriptional elongation: the complex terminates transcription by (1) catalyzing dephosphorylation of the C-terminal domain (CTD) of Pol II subunit POLR2A/RPB1 and SUPT5H/SPT5, (2) degrading the exiting nascent RNA transcript via endonuclease activity and (3) promoting the release of Pol II from bound DNA. The integrator complex is also involved in terminating the synthesis of non-coding Pol II transcripts, such as enhancer RNAs (eRNAs), small nuclear RNAs (snRNAs), telomerase RNAs and long non-coding RNAs (lncRNAs). Mediates recruitment of cytoplasmic dynein to the nuclear envelope, probably as component of the integrator complex. The chain is Integrator complex subunit 5 (Ints5) from Mus musculus (Mouse).